The chain runs to 93 residues: Aspartyl/glutamyl-tRNA(Asn/Gln) amidotransferase subunit C (93 aa).

It belongs to the GatC family. As to quaternary structure, heterotrimer of A, B and C subunits.

It catalyses the reaction L-glutamyl-tRNA(Gln) + L-glutamine + ATP + H2O = L-glutaminyl-tRNA(Gln) + L-glutamate + ADP + phosphate + H(+). The catalysed reaction is L-aspartyl-tRNA(Asn) + L-glutamine + ATP + H2O = L-asparaginyl-tRNA(Asn) + L-glutamate + ADP + phosphate + 2 H(+). Functionally, allows the formation of correctly charged Asn-tRNA(Asn) or Gln-tRNA(Gln) through the transamidation of misacylated Asp-tRNA(Asn) or Glu-tRNA(Gln) in organisms which lack either or both of asparaginyl-tRNA or glutaminyl-tRNA synthetases. The reaction takes place in the presence of glutamine and ATP through an activated phospho-Asp-tRNA(Asn) or phospho-Glu-tRNA(Gln). This Methanothrix thermoacetophila (strain DSM 6194 / JCM 14653 / NBRC 101360 / PT) (Methanosaeta thermophila) protein is Aspartyl/glutamyl-tRNA(Asn/Gln) amidotransferase subunit C.